The following is a 342-amino-acid chain: Ferredoxin--NADP reductase (342 aa).

FAD contacts are provided by C17, D36, Q44, Y49, I89, F124, D289, and T330.

This sequence belongs to the ferredoxin--NADP reductase type 2 family. In terms of assembly, homodimer. The cofactor is FAD.

It catalyses the reaction 2 reduced [2Fe-2S]-[ferredoxin] + NADP(+) + H(+) = 2 oxidized [2Fe-2S]-[ferredoxin] + NADPH. This chain is Ferredoxin--NADP reductase, found in Rhodopseudomonas palustris (strain BisB5).